The chain runs to 226 residues: MTTLERPQPKLSMADKAARIDAICEKARILPVITIAREEDILPLADALAAGGIRTLEVTLRSQHGLKAIQVLREQRPELCVGAGTVLDRSMFAAVEAAGAQFVVTPGITEDILEAGVDSEIPLLPGISTPSEIMMGYALGYRRFKLFPAEISGGVAAIKAFGGPFGDIRFCPTGGVNPANVRNYMALPNVMCVGTGWMLDSSWIKNGDWARIEACSAEAIALLDAN.

Glutamate 57 functions as the Proton acceptor in the catalytic mechanism. The pyruvate site is built by arginine 61, threonine 85, and lysine 145. Catalysis depends on lysine 145, which acts as the Schiff-base intermediate with substrate.

The protein belongs to the KHG/KDPG aldolase family. Homotrimer.

It carries out the reaction 2-dehydro-3-deoxy-6-phospho-D-gluconate = D-glyceraldehyde 3-phosphate + pyruvate. It participates in carbohydrate acid metabolism; 2-dehydro-3-deoxy-D-gluconate degradation; D-glyceraldehyde 3-phosphate and pyruvate from 2-dehydro-3-deoxy-D-gluconate: step 2/2. In terms of biological role, involved in the degradation of glucose via the Entner-Doudoroff pathway. Catalyzes the reversible, stereospecific retro-aldol cleavage of 2-keto-3-deoxy-6-phosphogluconate (KDPG) to pyruvate and D-glyceraldehyde-3-phosphate. The chain is 2-dehydro-3-deoxy-phosphogluconate aldolase from Pseudomonas putida (Arthrobacter siderocapsulatus).